The chain runs to 181 residues: Large ribosomal subunit protein uL5 (181 aa).

This sequence belongs to the universal ribosomal protein uL5 family. As to quaternary structure, part of the 50S ribosomal subunit; part of the 5S rRNA/L5/L18/L25 subcomplex. Contacts the 5S rRNA and the P site tRNA. Forms a bridge to the 30S subunit in the 70S ribosome.

In terms of biological role, this is one of the proteins that bind and probably mediate the attachment of the 5S RNA into the large ribosomal subunit, where it forms part of the central protuberance. In the 70S ribosome it contacts protein S13 of the 30S subunit (bridge B1b), connecting the 2 subunits; this bridge is implicated in subunit movement. Contacts the P site tRNA; the 5S rRNA and some of its associated proteins might help stabilize positioning of ribosome-bound tRNAs. The chain is Large ribosomal subunit protein uL5 from Nitrosococcus oceani (strain ATCC 19707 / BCRC 17464 / JCM 30415 / NCIMB 11848 / C-107).